The following is a 104-amino-acid chain: Iron-sulfur cluster assembly protein CyaY (104 aa).

It belongs to the frataxin family.

Involved in iron-sulfur (Fe-S) cluster assembly. May act as a regulator of Fe-S biogenesis. The protein is Iron-sulfur cluster assembly protein CyaY of Vibrio atlanticus (strain LGP32) (Vibrio splendidus (strain Mel32)).